The chain runs to 39 residues: Photosystem I reaction center subunit IX (39 aa).

The helical transmembrane segment at 4 to 24 threads the bilayer; that stretch reads FLTTAPVVAAIWFTLTAGILI.

This sequence belongs to the PsaJ family.

The protein localises to the cellular thylakoid membrane. May help in the organization of the PsaE and PsaF subunits. The protein is Photosystem I reaction center subunit IX of Synechococcus sp. (strain CC9311).